A 71-amino-acid chain; its full sequence is Protein PSY2 (71 aa).

The first 20 residues, 1-20 (MSFGTRLLLFLILTLPLVTS), serve as a signal peptide directing secretion. Positions 21–46 (SSPNTLHVSGIVKTGTTSRFLMMTIE) are excised as a propeptide. The residue at position 48 (Tyr48) is a Sulfotyrosine. The segment at 50 to 71 (DPSANTRHDPSVPTNAKADTTP) is disordered. Over residues 61-71 (VPTNAKADTTP) the composition is skewed to polar residues. Residue Pro62 is modified to 4-hydroxyproline. A glycan (O-linked (Ara...) hydroxyproline) is linked at Pro62. The propeptide occupies 65–71 (AKADTTP).

Belongs to the sulfated-peptide plant hormone family. The sulfation and the glycosylation are required for full activity.

The protein resides in the secreted. Promotes cellular proliferation and expansion. The chain is Protein PSY2 (PSY2) from Arabidopsis thaliana (Mouse-ear cress).